The sequence spans 338 residues: Nucleoid-associated protein PA14_59050 (338 aa).

It belongs to the YejK family.

The protein localises to the cytoplasm. The protein resides in the nucleoid. The sequence is that of Nucleoid-associated protein PA14_59050 from Pseudomonas aeruginosa (strain UCBPP-PA14).